Reading from the N-terminus, the 279-residue chain is uncharacterized protein (279 aa).

The region spanning 1 to 87 is the Reverse transcriptase domain; sequence MRVNGRNLTN…DEYIYLGRQI (87 aa).

This is an uncharacterized protein from Caenorhabditis elegans.